A 219-amino-acid polypeptide reads, in one-letter code: Thymidylate kinase (219 aa).

7–14 (GIDGCGKT) is a binding site for ATP.

The protein belongs to the thymidylate kinase family.

The enzyme catalyses dTMP + ATP = dTDP + ADP. In terms of biological role, phosphorylation of dTMP to form dTDP in both de novo and salvage pathways of dTTP synthesis. This is Thymidylate kinase from Anaplasma phagocytophilum (strain HZ).